The primary structure comprises 488 residues: Malonate-semialdehyde dehydrogenase (488 aa).

Residues Ala-150, Phe-152, Lys-176, Glu-179, Arg-180, Ser-229, and Thr-251 each contribute to the NAD(+) site. The active-site Nucleophile is the Cys-284. Position 382 (Glu-382) interacts with NAD(+).

It belongs to the aldehyde dehydrogenase family. IolA subfamily. In terms of assembly, homotetramer.

The catalysed reaction is 3-oxopropanoate + NAD(+) + CoA + H2O = hydrogencarbonate + acetyl-CoA + NADH + H(+). The enzyme catalyses 2-methyl-3-oxopropanoate + NAD(+) + CoA + H2O = propanoyl-CoA + hydrogencarbonate + NADH + H(+). It participates in polyol metabolism; myo-inositol degradation into acetyl-CoA; acetyl-CoA from myo-inositol: step 7/7. Catalyzes the oxidation of malonate semialdehyde (MSA) and methylmalonate semialdehyde (MMSA) into acetyl-CoA and propanoyl-CoA, respectively. Is involved in a myo-inositol catabolic pathway. Bicarbonate, and not CO2, is the end-product of the enzymatic reaction. This Listeria monocytogenes serovar 1/2a (strain ATCC BAA-679 / EGD-e) protein is Malonate-semialdehyde dehydrogenase.